Reading from the N-terminus, the 952-residue chain is Germ layers disorganized gldi-3 (952 aa).

Residues 39–100 form the FHA domain; it reads KSFGRATTND…NGTYINDRRL (62 aa). Disordered regions lie at residues 174 to 220, 483 to 639, and 652 to 866; these read IGPR…MPST, GTPK…ESTV, and AAQS…KERC. Composition is skewed to polar residues over residues 179–195 and 202–220; these read PSTT…STNG and NRAS…MPST. Acidic residues predominate over residues 523-537; sequence EESEILDVVGTDEPD. Over residues 553–568 the composition is skewed to basic and acidic residues; that stretch reads PEDHGRQTQNKIDKNV. Composition is skewed to polar residues over residues 569–584 and 600–620; these read RMSS…TPSA and VTSS…NPVS. Residues 662–679 are compositionally biased toward low complexity; the sequence is SVSNTTSSTSASLTTSSV. The span at 685 to 706 shows a compositional bias: basic and acidic residues; sequence TSSKENTDQKRAVDDSSDESAR. Over residues 715–724 the composition is skewed to low complexity; that stretch reads SATPSSTPAE. The span at 725-742 shows a compositional bias: basic and acidic residues; that stretch reads SSKRKQKDTSSRKMKQLD. Residues 761–772 are compositionally biased toward basic residues; that stretch reads TKRRDKARRSTR. Positions 789–800 are enriched in acidic residues; that stretch reads VEDEDETDDVQE. Composition is skewed to basic and acidic residues over residues 823–832 and 856–866; these read IKERKTKDKD and PPKTEPSKERC.

It is found in the nucleus. Its function is as follows. Potential transcription factor that may play a role in the regulation of genes involved in cell cycle G1/S transition. May bind to regulatory elements of genes. This is Germ layers disorganized gldi-3 from Caenorhabditis elegans.